A 253-amino-acid chain; its full sequence is 5'/3'-nucleotidase SurE (253 aa).

The a divalent metal cation site is built by Asp8, Asp9, Ser39, and Asn92.

The protein belongs to the SurE nucleotidase family. Requires a divalent metal cation as cofactor.

The protein localises to the cytoplasm. The enzyme catalyses a ribonucleoside 5'-phosphate + H2O = a ribonucleoside + phosphate. It carries out the reaction a ribonucleoside 3'-phosphate + H2O = a ribonucleoside + phosphate. It catalyses the reaction [phosphate](n) + H2O = [phosphate](n-1) + phosphate + H(+). In terms of biological role, nucleotidase with a broad substrate specificity as it can dephosphorylate various ribo- and deoxyribonucleoside 5'-monophosphates and ribonucleoside 3'-monophosphates with highest affinity to 3'-AMP. Also hydrolyzes polyphosphate (exopolyphosphatase activity) with the preference for short-chain-length substrates (P20-25). Might be involved in the regulation of dNTP and NTP pools, and in the turnover of 3'-mononucleotides produced by numerous intracellular RNases (T1, T2, and F) during the degradation of various RNAs. The sequence is that of 5'/3'-nucleotidase SurE from Escherichia coli O7:K1 (strain IAI39 / ExPEC).